Reading from the N-terminus, the 217-residue chain is Adenylate kinase (217 aa).

10 to 15 lines the ATP pocket; the sequence is GAGKGT. The segment at 30–59 is NMP; it reads STGDMLRAAIREGTELGLKAKSVMESGGLV. Residues Thr31, Arg36, 57-59, 85-88, and Gln92 contribute to the AMP site; these read GLV and GFPR. The interval 122–159 is LID; it reads GRRQHPASGRVYHVVYNPPKVEGKDDETGEDLVQRPDD. Residues Arg123 and 132 to 133 contribute to the ATP site; that span reads VY. Arg156 and Arg167 together coordinate AMP. Arg202 lines the ATP pocket.

This sequence belongs to the adenylate kinase family. Monomer.

It localises to the cytoplasm. It carries out the reaction AMP + ATP = 2 ADP. Its pathway is purine metabolism; AMP biosynthesis via salvage pathway; AMP from ADP: step 1/1. Functionally, catalyzes the reversible transfer of the terminal phosphate group between ATP and AMP. Plays an important role in cellular energy homeostasis and in adenine nucleotide metabolism. The protein is Adenylate kinase of Acinetobacter baumannii (strain AB307-0294).